The chain runs to 700 residues: Putative glutamine-dependent NAD(+) synthetase (700 aa).

The CN hydrolase domain maps to 5 to 275 (VTIASCQLNQ…VEVISATVDV (271 aa)). The active-site Proton acceptor; for glutaminase activity is Glu45. Lys114 (for glutaminase activity) is an active-site residue. The active-site Nucleophile; for glutaminase activity is the Cys175. A ligase region spans residues 327 to 700 (IPLPEEEITF…ASKFEQHQRK (374 aa)). An ATP-binding site is contributed by 357-364 (PLSGGLDS). The active site involves Ser359.

This sequence in the C-terminal section; belongs to the NAD synthetase family.

The catalysed reaction is deamido-NAD(+) + L-glutamine + ATP + H2O = L-glutamate + AMP + diphosphate + NAD(+) + H(+). It participates in cofactor biosynthesis; NAD(+) biosynthesis; NAD(+) from deamido-NAD(+) (L-Gln route): step 1/1. This chain is Putative glutamine-dependent NAD(+) synthetase, found in Schizosaccharomyces pombe (strain 972 / ATCC 24843) (Fission yeast).